A 75-amino-acid polypeptide reads, in one-letter code: U6-lycotoxin-Ls1h (75 aa).

Positions 1–21 are cleaved as a signal peptide; it reads MKLLLFTALVLVVISLIEVEA. A propeptide spanning residues 22–25 is cleaved from the precursor; sequence ENER.

The protein belongs to the neurotoxin 19 (CSTX) family. 06 (U6-Lctx) subfamily. Contains 4 disulfide bonds. As to expression, expressed by the venom gland.

Its subcellular location is the secreted. This Lycosa singoriensis (Wolf spider) protein is U6-lycotoxin-Ls1h.